The following is a 316-amino-acid chain: Transaldolase (316 aa).

The active-site Schiff-base intermediate with substrate is lysine 132.

Belongs to the transaldolase family. Type 1 subfamily. As to quaternary structure, homodimer.

It is found in the cytoplasm. It catalyses the reaction D-sedoheptulose 7-phosphate + D-glyceraldehyde 3-phosphate = D-erythrose 4-phosphate + beta-D-fructose 6-phosphate. The protein operates within carbohydrate degradation; pentose phosphate pathway; D-glyceraldehyde 3-phosphate and beta-D-fructose 6-phosphate from D-ribose 5-phosphate and D-xylulose 5-phosphate (non-oxidative stage): step 2/3. Its function is as follows. Transaldolase is important for the balance of metabolites in the pentose-phosphate pathway. The sequence is that of Transaldolase from Aliivibrio salmonicida (strain LFI1238) (Vibrio salmonicida (strain LFI1238)).